A 489-amino-acid polypeptide reads, in one-letter code: Rhamnulokinase (489 aa).

13–17 (ASSGR) is an ATP binding site. Cysteines 68 and 222 form a disulfide. Residues G83 and 236–238 (HDT) each bind substrate. D237 functions as the Proton acceptor in the catalytic mechanism. T259 lines the ATP pocket. N296 provides a ligand contact to substrate. Q304 provides a ligand contact to ATP. Cysteines 353 and 370 form a disulfide. Residue G402 coordinates ATP. A disulfide bond links C413 and C417.

It belongs to the rhamnulokinase family. Mg(2+) serves as cofactor.

It catalyses the reaction L-rhamnulose + ATP = L-rhamnulose 1-phosphate + ADP + H(+). The protein operates within carbohydrate degradation; L-rhamnose degradation; glycerone phosphate from L-rhamnose: step 2/3. Functionally, involved in the catabolism of L-rhamnose (6-deoxy-L-mannose). Catalyzes the transfer of the gamma-phosphate group from ATP to the 1-hydroxyl group of L-rhamnulose to yield L-rhamnulose 1-phosphate. In Salmonella dublin (strain CT_02021853), this protein is Rhamnulokinase.